We begin with the raw amino-acid sequence, 267 residues long: Aspartate/glutamate leucyltransferase (267 aa).

Residues 246–267 are disordered; it reads EQEEQTRPLFRPSATGFSTGQE.

Belongs to the R-transferase family. Bpt subfamily.

It localises to the cytoplasm. The enzyme catalyses N-terminal L-glutamyl-[protein] + L-leucyl-tRNA(Leu) = N-terminal L-leucyl-L-glutamyl-[protein] + tRNA(Leu) + H(+). The catalysed reaction is N-terminal L-aspartyl-[protein] + L-leucyl-tRNA(Leu) = N-terminal L-leucyl-L-aspartyl-[protein] + tRNA(Leu) + H(+). Functions in the N-end rule pathway of protein degradation where it conjugates Leu from its aminoacyl-tRNA to the N-termini of proteins containing an N-terminal aspartate or glutamate. This is Aspartate/glutamate leucyltransferase from Granulibacter bethesdensis (strain ATCC BAA-1260 / CGDNIH1).